A 200-amino-acid chain; its full sequence is dITP/XTP pyrophosphatase (200 aa).

7–12 (TSNKHK) serves as a coordination point for substrate. Glu-38 and Asp-73 together coordinate Mg(2+). Asp-73 acts as the Proton acceptor in catalysis. Substrate-binding positions include Ser-74, 154-157 (FGYD), Lys-177, and 182-183 (HR).

It belongs to the HAM1 NTPase family. As to quaternary structure, homodimer. Requires Mg(2+) as cofactor.

It carries out the reaction XTP + H2O = XMP + diphosphate + H(+). The enzyme catalyses dITP + H2O = dIMP + diphosphate + H(+). The catalysed reaction is ITP + H2O = IMP + diphosphate + H(+). Pyrophosphatase that catalyzes the hydrolysis of nucleoside triphosphates to their monophosphate derivatives, with a high preference for the non-canonical purine nucleotides XTP (xanthosine triphosphate), dITP (deoxyinosine triphosphate) and ITP. Seems to function as a house-cleaning enzyme that removes non-canonical purine nucleotides from the nucleotide pool, thus preventing their incorporation into DNA/RNA and avoiding chromosomal lesions. This Campylobacter jejuni subsp. doylei (strain ATCC BAA-1458 / RM4099 / 269.97) protein is dITP/XTP pyrophosphatase.